The following is a 206-amino-acid chain: Protein GET1 (206 aa).

The Lumenal portion of the chain corresponds to 1-4; the sequence is MPSL. Residues 5–24 traverse the membrane as a helical segment; the sequence is LITVLFLNVIIYVINTVGAA. The Cytoplasmic segment spans residues 25 to 110; it reads TVDGLLWLLY…TFDMTIKIAR (86 aa). Residues 75 to 100 adopt a coiled-coil conformation; the sequence is AKLRRRHDKAMEAYEAKNNELTQSKS. Residues 111-131 form a helical membrane-spanning segment; the sequence is WAATSGLMLFLQFWYSKTPIF. The Lumenal portion of the chain corresponds to 132 to 155; sequence TLPPGWIPWQVQWVLSFPRAPMGT. A helical transmembrane segment spans residues 156 to 172; it reads VSIQIWGGACATVVALV. Topologically, residues 173-206 are cytoplasmic; that stretch reads GDAMRASLAYVSKPKIDRIKLGATMEGKEGKKRQ.

Belongs to the WRB/GET1 family. As to quaternary structure, interacts with GET3.

It localises to the endoplasmic reticulum membrane. Its function is as follows. Required for the post-translational delivery of tail-anchored (TA) proteins to the endoplasmic reticulum. Acts as a membrane receptor for soluble GET3, which recognizes and selectively binds the transmembrane domain of TA proteins in the cytosol. This Ajellomyces capsulatus (strain NAm1 / WU24) (Darling's disease fungus) protein is Protein GET1.